A 157-amino-acid chain; its full sequence is Trafficking protein particle complex subunit 6b (157 aa).

Belongs to the TRAPP small subunits family. BET3 subfamily. As to quaternary structure, homodimer. Part of a TRAPP complex.

It is found in the golgi apparatus. The protein resides in the cis-Golgi network. It localises to the endoplasmic reticulum. In terms of biological role, component of a transport protein particle (TRAPP) complex that may function in specific stages of inter-organelle traffic. Specifically involved in the early development of neural circuitry, likely by controlling the frequency and amplitude of intracellular calcium transients implicated in the regulation of neuron differentiation and survival. The sequence is that of Trafficking protein particle complex subunit 6b from Danio rerio (Zebrafish).